Here is a 55-residue protein sequence, read N- to C-terminus: Small ribosomal subunit protein uS14 (55 aa).

Residues C20, C23, C38, and C41 each contribute to the Zn(2+) site.

It belongs to the universal ribosomal protein uS14 family. Requires Zn(2+) as cofactor.

The chain is Small ribosomal subunit protein uS14 (rps29) from Dictyostelium discoideum (Social amoeba).